The sequence spans 194 residues: Holliday junction branch migration complex subunit RuvA (194 aa).

The interval 1–64 (MIAYIQGSIT…QDAHTLYGFS (64 aa)) is domain I. Residues 65–143 (TIEEKQCFLQ…KVGNMLSLQP (79 aa)) form a domain II region. The tract at residues 144 to 150 (SGQEAIY) is flexible linker. Residues 150–194 (YQEALAALSKLGIHKSTAEKTVAAILKEHQGEITVESLIKLALKG) are domain III.

The protein belongs to the RuvA family. Homotetramer. Forms an RuvA(8)-RuvB(12)-Holliday junction (HJ) complex. HJ DNA is sandwiched between 2 RuvA tetramers; dsDNA enters through RuvA and exits via RuvB. An RuvB hexamer assembles on each DNA strand where it exits the tetramer. Each RuvB hexamer is contacted by two RuvA subunits (via domain III) on 2 adjacent RuvB subunits; this complex drives branch migration. In the full resolvosome a probable DNA-RuvA(4)-RuvB(12)-RuvC(2) complex forms which resolves the HJ.

The protein resides in the cytoplasm. In terms of biological role, the RuvA-RuvB-RuvC complex processes Holliday junction (HJ) DNA during genetic recombination and DNA repair, while the RuvA-RuvB complex plays an important role in the rescue of blocked DNA replication forks via replication fork reversal (RFR). RuvA specifically binds to HJ cruciform DNA, conferring on it an open structure. The RuvB hexamer acts as an ATP-dependent pump, pulling dsDNA into and through the RuvAB complex. HJ branch migration allows RuvC to scan DNA until it finds its consensus sequence, where it cleaves and resolves the cruciform DNA. This Amoebophilus asiaticus (strain 5a2) protein is Holliday junction branch migration complex subunit RuvA.